Reading from the N-terminus, the 346-residue chain is Cytidine deaminase 5 (346 aa).

CMP/dCMP-type deaminase domains lie at 20 to 148 (TDHK…FGSE) and 183 to 304 (DLCS…ITGA). Substrate is bound at residue 58–60 (NVE). H71 provides a ligand contact to Zn(2+). The active-site Proton donor is E73. Zn(2+)-binding residues include C104 and C107.

The protein belongs to the cytidine and deoxycytidylate deaminase family. Homodimer. Zn(2+) is required as a cofactor.

It catalyses the reaction cytidine + H2O + H(+) = uridine + NH4(+). The catalysed reaction is 2'-deoxycytidine + H2O + H(+) = 2'-deoxyuridine + NH4(+). This enzyme scavenges exogenous and endogenous cytidine and 2'-deoxycytidine for UMP synthesis. The protein is Cytidine deaminase 5 (CDA5) of Arabidopsis thaliana (Mouse-ear cress).